The primary structure comprises 467 residues: Dimethylamine methyltransferase MtbB1 (467 aa).

Pyrrolysine 356 is a non-standard amino acid (pyrrolysine).

It belongs to the dimethylamine methyltransferase family. As to quaternary structure, may form homotetramers or homopentamers.

The catalysed reaction is Co(I)-[dimethylamine-specific corrinoid protein] + dimethylamine + H(+) = methyl-Co(III)-[dimethylamine-specific corrinoid protein] + methylamine. It participates in one-carbon metabolism; methanogenesis from dimethylamine. Functionally, catalyzes the transfer of a methyl group from dimethylamine to the corrinoid cofactor of MtbC. The major or perhaps only DMA methyltransferase expressed under inducing conditions. The sequence is that of Dimethylamine methyltransferase MtbB1 from Methanosarcina barkeri.